The chain runs to 25 residues: Putative cytochrome c4 (25 aa).

The interval 1–25 (QEDIEAGKQKSATCTACHGQEGNST) is disordered. Residues cysteine 14 and cysteine 17 each coordinate heme.

Post-translationally, binds 2 heme groups per subunit.

It is found in the periplasm. Functionally, diheme, high potential cytochrome c believed to be an intermediate electron donor to terminal oxidation systems. This is Putative cytochrome c4 from Aliivibrio fischeri (Vibrio fischeri).